The chain runs to 451 residues: Cysteine protease ATG4 (451 aa).

C122 (nucleophile) is an active-site residue. Active-site residues include D297 and H299.

It belongs to the peptidase C54 family. Interacts with ATG8.

The protein resides in the cytoplasm. Its subcellular location is the nucleus. It localises to the preautophagosomal structure. The enzyme catalyses [protein]-C-terminal L-amino acid-glycyl-phosphatidylethanolamide + H2O = [protein]-C-terminal L-amino acid-glycine + a 1,2-diacyl-sn-glycero-3-phosphoethanolamine. Its function is as follows. Cysteine protease that plays a key role in cytoplasm to vacuole transport (Cvt) and autophagy by mediating both proteolytic activation and delipidation of ATG8. Required for selective autophagic degradation of the nucleus (nucleophagy) as well as for mitophagy which contributes to regulate mitochondrial quantity and quality by eliminating the mitochondria to a basal level to fulfill cellular energy requirements and preventing excess ROS production. The protease activity is required for proteolytic activation of ATG8: cleaves the C-terminal amino acid of ATG8 to reveal a C-terminal glycine. ATG8 ubiquitin-like activity requires the exposure of the glycine at the C-terminus for its conjugation to phosphatidylethanolamine (PE) and its insertion to membranes, which is necessary for autophagy. The ATG8-PE conjugate mediates tethering between adjacent membranes and stimulates membrane hemifusion, leading to expansion of the autophagosomal membrane during autophagy. In addition to the protease activity, also catalyzes deconjugation of PE-conjugated forms of ATG8 during macroautophagy: ATG8 delipidation is required to release the protein from membranes, which facilitates multiple events during macroautophagy, and especially for efficient autophagosome biogenesis, the assembly of ATG9-containing tubulovesicular clusters into phagophores/autophagosomes, and for the disassembly of PAS-associated ATG components. ATG8 delipidation by ATG4 also recycles ATG8-PE generated on inappropriate membranes to maintain a reservoir of unlipidated ATG8 that is required for autophagosome formation at the PAS. The protein is Cysteine protease ATG4 of Kluyveromyces marxianus (strain DMKU3-1042 / BCC 29191 / NBRC 104275) (Yeast).